Consider the following 457-residue polypeptide: Cysteine--tRNA ligase (457 aa).

Zn(2+) is bound at residue cysteine 30. Positions 32–42 (PTVYDRAHLGN) match the 'HIGH' region motif. Residues cysteine 213, histidine 238, and glutamate 242 each contribute to the Zn(2+) site. Positions 271-275 (KMSKS) match the 'KMSKS' region motif. Residue lysine 274 participates in ATP binding.

This sequence belongs to the class-I aminoacyl-tRNA synthetase family. As to quaternary structure, monomer. The cofactor is Zn(2+).

It is found in the cytoplasm. The catalysed reaction is tRNA(Cys) + L-cysteine + ATP = L-cysteinyl-tRNA(Cys) + AMP + diphosphate. The chain is Cysteine--tRNA ligase from Ruegeria sp. (strain TM1040) (Silicibacter sp.).